A 1057-amino-acid chain; its full sequence is Glycine dehydrogenase (decarboxylating), mitochondrial (1057 aa).

A mitochondrion-targeting transit peptide spans Met1–Ser86. Residues Ser18–Glu27 show a composition bias toward basic and acidic residues. Residues Ser18 to Arg47 form a disordered region. Low complexity predominate over residues Ser28–Arg47. Lys792 is modified (N6-(pyridoxal phosphate)lysine).

The protein belongs to the GcvP family. As to quaternary structure, homodimer. The glycine cleavage system is composed of four proteins: P, T, L and H. It depends on pyridoxal 5'-phosphate as a cofactor. Highly expressed in leaves. Detected in roots and embryos.

The protein localises to the mitochondrion. It catalyses the reaction N(6)-[(R)-lipoyl]-L-lysyl-[glycine-cleavage complex H protein] + glycine + H(+) = N(6)-[(R)-S(8)-aminomethyldihydrolipoyl]-L-lysyl-[glycine-cleavage complex H protein] + CO2. The glycine cleavage system catalyzes the degradation of glycine. The P protein binds the alpha-amino group of glycine through its pyridoxal phosphate cofactor; CO(2) is released and the remaining methylamine moiety is then transferred to the lipoamide cofactor of the H protein. The protein is Glycine dehydrogenase (decarboxylating), mitochondrial (GDCSP) of Pisum sativum (Garden pea).